The chain runs to 303 residues: Quinolinate synthase (303 aa).

2 residues coordinate iminosuccinate: H25 and S42. Residue C87 coordinates [4Fe-4S] cluster. Iminosuccinate-binding positions include 113–115 (YVN) and S130. Position 174 (C174) interacts with [4Fe-4S] cluster. Iminosuccinate contacts are provided by residues 200–202 (HPE) and T217. Residue C260 participates in [4Fe-4S] cluster binding.

Belongs to the quinolinate synthase family. Type 2 subfamily. Homodimer. It depends on [4Fe-4S] cluster as a cofactor.

It localises to the cytoplasm. The enzyme catalyses iminosuccinate + dihydroxyacetone phosphate = quinolinate + phosphate + 2 H2O + H(+). It functions in the pathway cofactor biosynthesis; NAD(+) biosynthesis; quinolinate from iminoaspartate: step 1/1. Its function is as follows. Catalyzes the condensation of iminoaspartate with dihydroxyacetone phosphate to form quinolinate. The chain is Quinolinate synthase from Pyrococcus furiosus (strain ATCC 43587 / DSM 3638 / JCM 8422 / Vc1).